A 797-amino-acid polypeptide reads, in one-letter code: LPS-assembly protein LptD (797 aa).

An N-terminal signal peptide occupies residues 1–20; sequence MHTIRCLILSALSVAGAAQA. Positions 23–45 are disordered; it reads SQDAAPAGRQPVGSVASPGLEMP.

The protein belongs to the LptD family. As to quaternary structure, component of the lipopolysaccharide transport and assembly complex. Interacts with LptE and LptA.

It is found in the cell outer membrane. In terms of biological role, together with LptE, is involved in the assembly of lipopolysaccharide (LPS) at the surface of the outer membrane. This chain is LPS-assembly protein LptD, found in Bordetella avium (strain 197N).